Reading from the N-terminus, the 612-residue chain is Coagulation factor X-activating enzyme heavy chain (612 aa).

An N-terminal signal peptide occupies residues 1–20 (MMQVLLVTISLAVFPYQGSS). Positions 21–193 (IILESGNVND…KKASQLVATS (173 aa)) are cleaved as a propeptide — or 194. Positions 201-395 (TFIELVIVVD…YKPKCILNPP (195 aa)) constitute a Peptidase M12B domain. Glutamate 204 provides a ligand contact to Ca(2+). Asparagine 259 is a glycosylation site (N-linked (GlcNAc...) asparagine). Aspartate 286 is a binding site for Ca(2+). Intrachain disulfides connect cysteine 310/cysteine 390, cysteine 350/cysteine 374, and cysteine 352/cysteine 357. Residue histidine 335 coordinates Zn(2+). Glutamate 336 is an active-site residue. Zn(2+)-binding residues include histidine 339 and histidine 345. N-linked (GlcNAc...) asparagine glycosylation is found at asparagine 353 and asparagine 373. Positions 390, 393, 405, 408, 412, 415, and 418 each coordinate Ca(2+). In terms of domain architecture, Disintegrin spans 403-489 (PPICGNEIWE…ECPADGFHAN (87 aa)). The cysteines at positions 461 and 481 are disulfide-linked. A D/ECD-tripeptide motif is present at residues 467–469 (ECD).

The protein belongs to the venom metalloproteinase (M12B) family. P-III subfamily. P-IIId sub-subfamily. In terms of assembly, heterotrimer; disulfide-linked. The heterotrimer consists of 1 heavy chain and 2 light chains (lectins): LC1 and LC2 (AC Q7T045 and AC Q696W1). Requires Zn(2+) as cofactor. In terms of processing, N-glycosylated. Contains 8.0% of hexoses, 2.5% of hexosamines and 2.5% of sialic acids. Expressed by the venom gland.

Its subcellular location is the secreted. It carries out the reaction Specifically activates several components of the blood clotting system, including coagulation factor X, coagulation factor IX and protein C by cleavage of Arg-|-Xaa bonds. Has no action on insulin B chain.. Its activity is regulated as follows. Calcium is required for the activity of the heterotrimer. Catalytic subunit of blood coagulation factor X-activating enzyme. Activates coagulation factor X (F10) by cleaving the Arg(234)-Ile(235) bond, activates coagulation factor IX (F9) by cleaving the Arg(226)-Val(227) bond and is also able to activate protein C (PROC). The protein is Coagulation factor X-activating enzyme heavy chain of Macrovipera lebetinus (Levantine viper).